A 314-amino-acid polypeptide reads, in one-letter code: Ribonuclease Z (314 aa).

Zn(2+)-binding residues include H61, H63, D65, H66, H139, D211, and H269. Catalysis depends on D65, which acts as the Proton acceptor.

Belongs to the RNase Z family. As to quaternary structure, homodimer. The cofactor is Zn(2+).

The enzyme catalyses Endonucleolytic cleavage of RNA, removing extra 3' nucleotides from tRNA precursor, generating 3' termini of tRNAs. A 3'-hydroxy group is left at the tRNA terminus and a 5'-phosphoryl group is left at the trailer molecule.. In terms of biological role, zinc phosphodiesterase, which displays some tRNA 3'-processing endonuclease activity. Probably involved in tRNA maturation, by removing a 3'-trailer from precursor tRNA. The chain is Ribonuclease Z from Gemmatimonas aurantiaca (strain DSM 14586 / JCM 11422 / NBRC 100505 / T-27).